Here is a 138-residue protein sequence, read N- to C-terminus: Basic phospholipase A2 Cvv-N6 (138 aa).

The first 16 residues, 1–16, serve as a signal peptide directing secretion; it reads MRTFWIVALLLVGVEG. 7 disulfides stabilise this stretch: Cys-42-Cys-131, Cys-44-Cys-60, Cys-59-Cys-111, Cys-65-Cys-138, Cys-66-Cys-104, Cys-73-Cys-97, and Cys-91-Cys-102. Residues Tyr-43, Gly-45, and Gly-47 each contribute to the Ca(2+) site. His-63 is a catalytic residue. Asp-64 lines the Ca(2+) pocket. The active site involves Asp-105.

Belongs to the phospholipase A2 family. Group II subfamily. D49 sub-subfamily. As to quaternary structure, monomer. Binds to calmodulin. Requires Ca(2+) as cofactor. In terms of tissue distribution, expressed by the venom gland.

Its subcellular location is the secreted. It catalyses the reaction a 1,2-diacyl-sn-glycero-3-phosphocholine + H2O = a 1-acyl-sn-glycero-3-phosphocholine + a fatty acid + H(+). With respect to regulation, heparin and wedelolactone inhibit the myotoxic activity. The PLA2 inhibitor, para-bromophenacyl bromide (BPB), inhibits enzymatic and myotoxic activities. Functionally, snake venom phospholipase A2 (PLA2) that is myotoxic and displays moderate edema-inducing activity in rat paws. Does not show neurotoxic activity. PLA2 catalyzes the calcium-dependent hydrolysis of the 2-acyl groups in 3-sn-phosphoglycerides. This is Basic phospholipase A2 Cvv-N6 from Crotalus viridis viridis (Prairie rattlesnake).